Reading from the N-terminus, the 452-residue chain is Bifunctional protein GlmU (452 aa).

Residues 1 to 233 are pyrophosphorylase; that stretch reads MTDRPFAALI…AWEVAGVNSR (233 aa). UDP-N-acetyl-alpha-D-glucosamine is bound by residues 11–14, Lys25, Gln76, 81–82, 104–106, Gly144, Glu159, Asn174, and Asn231; these read LAAG, GT, and YGD. Residue Asp106 participates in Mg(2+) binding. Asn231 is a binding site for Mg(2+). A linker region spans residues 234–254; sequence AELAAVEAEWQRRRRLAAMAD. Residues 255 to 452 are N-acetyltransferase; sequence GATLIAPETV…AMKIKKAARK (198 aa). UDP-N-acetyl-alpha-D-glucosamine contacts are provided by Arg320 and Lys338. Catalysis depends on His350, which acts as the Proton acceptor. Residues Tyr353 and Asn364 each coordinate UDP-N-acetyl-alpha-D-glucosamine. Residues Ala367, 373–374, Ser392, Ala410, and Arg427 each bind acetyl-CoA; that span reads NY.

This sequence in the N-terminal section; belongs to the N-acetylglucosamine-1-phosphate uridyltransferase family. In the C-terminal section; belongs to the transferase hexapeptide repeat family. Homotrimer. Mg(2+) is required as a cofactor.

It localises to the cytoplasm. It carries out the reaction alpha-D-glucosamine 1-phosphate + acetyl-CoA = N-acetyl-alpha-D-glucosamine 1-phosphate + CoA + H(+). The enzyme catalyses N-acetyl-alpha-D-glucosamine 1-phosphate + UTP + H(+) = UDP-N-acetyl-alpha-D-glucosamine + diphosphate. Its pathway is nucleotide-sugar biosynthesis; UDP-N-acetyl-alpha-D-glucosamine biosynthesis; N-acetyl-alpha-D-glucosamine 1-phosphate from alpha-D-glucosamine 6-phosphate (route II): step 2/2. It participates in nucleotide-sugar biosynthesis; UDP-N-acetyl-alpha-D-glucosamine biosynthesis; UDP-N-acetyl-alpha-D-glucosamine from N-acetyl-alpha-D-glucosamine 1-phosphate: step 1/1. It functions in the pathway bacterial outer membrane biogenesis; LPS lipid A biosynthesis. Catalyzes the last two sequential reactions in the de novo biosynthetic pathway for UDP-N-acetylglucosamine (UDP-GlcNAc). The C-terminal domain catalyzes the transfer of acetyl group from acetyl coenzyme A to glucosamine-1-phosphate (GlcN-1-P) to produce N-acetylglucosamine-1-phosphate (GlcNAc-1-P), which is converted into UDP-GlcNAc by the transfer of uridine 5-monophosphate (from uridine 5-triphosphate), a reaction catalyzed by the N-terminal domain. The chain is Bifunctional protein GlmU from Rhizorhabdus wittichii (strain DSM 6014 / CCUG 31198 / JCM 15750 / NBRC 105917 / EY 4224 / RW1) (Sphingomonas wittichii).